A 380-amino-acid chain; its full sequence is WAT1-related protein At2g37460 (380 aa).

10 consecutive transmembrane segments (helical) span residues 16-36, 45-65, 71-91, 107-127, 142-162, 187-207, 216-236, 254-274, 282-302, and 306-326; these read FISMVVLQVGLAGMDILSKAV, VLVVYRHAVATIVMAPFAFYF, PKMTLMIFFKISLLGLLEPVI, FATAMYNVLPAITFVLAYIFG, VVGTLATVGGAMIMTLVKGPV, GAVLVTIGCFSYACFMILQAI, LSLTAWICLMGTIEGTAVALV, LTATYSGIVCSALAYYVGGVV, FVTAFSPLCMIIVAIMSTIIF, and MYLGRVLGAVVICAGLYLVIW. The 108-residue stretch at 27–134 folds into the EamA 1 domain; that stretch reads AGMDILSKAV…IFGLERVKLR (108 aa). Residues 196 to 325 form the EamA 2 domain; the sequence is FSYACFMILQ…VICAGLYLVI (130 aa).

It belongs to the drug/metabolite transporter (DMT) superfamily. Plant drug/metabolite exporter (P-DME) (TC 2.A.7.4) family.

Its subcellular location is the membrane. In Arabidopsis thaliana (Mouse-ear cress), this protein is WAT1-related protein At2g37460.